The primary structure comprises 139 residues: Large ribosomal subunit protein uL16c (139 aa).

The segment covering 1 to 17 (MLSPKKTKFRKQHRGRM) has biased composition (basic residues). Positions 1–23 (MLSPKKTKFRKQHRGRMKGSASK) are disordered.

It belongs to the universal ribosomal protein uL16 family. In terms of assembly, part of the 50S ribosomal subunit.

It localises to the plastid. The protein resides in the chloroplast. In Porphyra purpurea (Red seaweed), this protein is Large ribosomal subunit protein uL16c.